The chain runs to 418 residues: Alpha-1-antitrypsin (418 aa).

Positions 1 to 24 (MPSSVSWGILLLAGLCCLVPVSLA) are cleaved as a signal peptide. Residue Ser38 is modified to Phosphoserine. Residues Asn70, Asn107, and Asn271 are each glycosylated (N-linked (GlcNAc...) asparagine). The interval 373 to 392 (GAMFLEAIPMSIPPEVKFNK) is RCL. Ser383 carries the post-translational modification Phosphoserine.

It belongs to the serpin family. As to quaternary structure, interacts with CELA2A. Interacts with ERGIC3 and LMAN1/ERGIC53. Interacts with PRSS1/Trypsin. As to expression, plasma.

It localises to the secreted. Its function is as follows. Inhibitor of serine proteases. Its primary target is elastase, but it also has a moderate affinity for plasmin and thrombin. Inhibits trypsin, chymotrypsin and plasminogen activator. This chain is Alpha-1-antitrypsin (SERPINA1), found in Pongo abelii (Sumatran orangutan).